The chain runs to 82 residues: Small ribosomal subunit protein bS16 (82 aa).

The protein belongs to the bacterial ribosomal protein bS16 family.

The protein is Small ribosomal subunit protein bS16 of Vibrio parahaemolyticus serotype O3:K6 (strain RIMD 2210633).